The following is a 74-amino-acid chain: Cytochrome b559 subunit alpha (74 aa).

The helical transmembrane segment at 22–36 threads the bilayer; the sequence is VIHTVTIPSLFVAGW. His-24 contacts heme.

The protein belongs to the PsbE/PsbF family. Heterodimer of an alpha subunit and a beta subunit. PSII is composed of 1 copy each of membrane proteins PsbA, PsbB, PsbC, PsbD, PsbE, PsbF, PsbH, PsbI, PsbJ, PsbK, PsbL, PsbM, PsbT, PsbX, PsbY, PsbZ, Psb30/Ycf12, at least 3 peripheral proteins of the oxygen-evolving complex and a large number of cofactors. It forms dimeric complexes. Heme b serves as cofactor.

Its subcellular location is the plastid. It localises to the cyanelle thylakoid membrane. In terms of biological role, this b-type cytochrome is tightly associated with the reaction center of photosystem II (PSII). PSII is a light-driven water:plastoquinone oxidoreductase that uses light energy to abstract electrons from H(2)O, generating O(2) and a proton gradient subsequently used for ATP formation. It consists of a core antenna complex that captures photons, and an electron transfer chain that converts photonic excitation into a charge separation. In Cyanophora paradoxa, this protein is Cytochrome b559 subunit alpha.